Here is a 357-residue protein sequence, read N- to C-terminus: Aminotransferase TOXF (357 aa).

Arginine 87 is a binding site for pyridoxal 5'-phosphate. The residue at position 188 (lysine 188) is an N6-(pyridoxal phosphate)lysine. Glutamate 227 lines the pyridoxal 5'-phosphate pocket.

The protein belongs to the class-IV pyridoxal-phosphate-dependent aminotransferase family. The cofactor is pyridoxal 5'-phosphate.

It participates in mycotoxin biosynthesis; HC-toxin biosynthesis. In terms of biological role, aminotransferase, part of the diffuse TOX2 gene cluster that mediates the biosynthesis of the HC-toxin, cyclic tetrapeptide of structure cyclo(D-Pro-L-Ala-D-Ala-L-Aeo), where Aeo stands for 2-amino-9,10-epoxi-8-oxodecanoic acid. HC-toxin is a determinant of specificity and virulence in the interaction between the producing fungus and its host, maize. TOXF contributes to the synthesis of 2-amino-9,10-epoxi-8-oxodecanoic acid, an essential precursor for the production of the major forms of HC-toxin by the non-ribosomal peptide synthetase HTS1. This chain is Aminotransferase TOXF (TOXF), found in Cochliobolus carbonum (Maize leaf spot fungus).